The sequence spans 399 residues: Subtilisin-like protease 1 (399 aa).

The signal sequence occupies residues 1–19 (MGVFRFISISLAAVSAANA). A propeptide spanning residues 20 to 116 (AQILSMPHAQ…VEPDTIISVH (97 aa)) is cleaved from the precursor. The Inhibitor I9 domain maps to 34–115 (SYIVMMKDDT…FVEPDTIISV (82 aa)). The Peptidase S8 domain maps to 126 to 399 (SWGLARISNP…TNVLINNGGA (274 aa)). Catalysis depends on charge relay system residues Asp158 and His190. The disordered stretch occupies residues 175 to 198 (GSNQVNDGDDRDGSGHGTHTSGTM). Asn251 is a glycosylation site (N-linked (GlcNAc...) asparagine). The segment covering 282–294 (NDNQDAQSSSPAS) has biased composition (polar residues). The tract at residues 282 to 312 (NDNQDAQSSSPASEPSVCTVGSSAEDDSRSS) is disordered. Ser345 serves as the catalytic Charge relay system.

It belongs to the peptidase S8 family.

It is found in the secreted. In terms of biological role, secreted subtilisin-like serine protease with keratinolytic activity that contributes to pathogenicity. The polypeptide is Subtilisin-like protease 1 (SUB1) (Arthroderma benhamiae (Trichophyton mentagrophytes)).